The primary structure comprises 185 residues: Threonylcarbamoyl-AMP synthase (185 aa).

Residues 4-185 (SWRVQQAARE…LATGEIVRPG (182 aa)) form the YrdC-like domain.

This sequence belongs to the SUA5 family. TsaC subfamily.

It localises to the cytoplasm. It catalyses the reaction L-threonine + hydrogencarbonate + ATP = L-threonylcarbamoyladenylate + diphosphate + H2O. Functionally, required for the formation of a threonylcarbamoyl group on adenosine at position 37 (t(6)A37) in tRNAs that read codons beginning with adenine. Catalyzes the conversion of L-threonine, HCO(3)(-)/CO(2) and ATP to give threonylcarbamoyl-AMP (TC-AMP) as the acyladenylate intermediate, with the release of diphosphate. This chain is Threonylcarbamoyl-AMP synthase, found in Pseudomonas putida (strain W619).